Here is a 255-residue protein sequence, read N- to C-terminus: Malonyl-[acyl-carrier protein] O-methyltransferase (255 aa).

The protein belongs to the methyltransferase superfamily.

The catalysed reaction is malonyl-[ACP] + S-adenosyl-L-methionine = malonyl-[ACP] methyl ester + S-adenosyl-L-homocysteine. Its pathway is cofactor biosynthesis; biotin biosynthesis. Converts the free carboxyl group of a malonyl-thioester to its methyl ester by transfer of a methyl group from S-adenosyl-L-methionine (SAM). It allows to synthesize pimeloyl-ACP via the fatty acid synthetic pathway. This Serratia marcescens protein is Malonyl-[acyl-carrier protein] O-methyltransferase.